Reading from the N-terminus, the 356-residue chain is Phosphoribosylformylglycinamidine cyclo-ligase (356 aa).

The protein belongs to the AIR synthase family.

It localises to the cytoplasm. The catalysed reaction is 2-formamido-N(1)-(5-O-phospho-beta-D-ribosyl)acetamidine + ATP = 5-amino-1-(5-phospho-beta-D-ribosyl)imidazole + ADP + phosphate + H(+). The protein operates within purine metabolism; IMP biosynthesis via de novo pathway; 5-amino-1-(5-phospho-D-ribosyl)imidazole from N(2)-formyl-N(1)-(5-phospho-D-ribosyl)glycinamide: step 2/2. In Desulfotalea psychrophila (strain LSv54 / DSM 12343), this protein is Phosphoribosylformylglycinamidine cyclo-ligase.